A 247-amino-acid polypeptide reads, in one-letter code: Geranylgeranylglyceryl phosphate synthase (247 aa).

Residues Asp23 and Ser52 each contribute to the Mg(2+) site. Sn-glycerol 1-phosphate is bound by residues 171–177, 203–204, and 225–226; these read YLEAGSG, GG, and GT.

The protein belongs to the GGGP/HepGP synthase family. Group II subfamily. Requires Mg(2+) as cofactor.

The protein resides in the cytoplasm. The catalysed reaction is sn-glycerol 1-phosphate + (2E,6E,10E)-geranylgeranyl diphosphate = sn-3-O-(geranylgeranyl)glycerol 1-phosphate + diphosphate. The protein operates within membrane lipid metabolism; glycerophospholipid metabolism. Its function is as follows. Prenyltransferase that catalyzes the transfer of the geranylgeranyl moiety of geranylgeranyl diphosphate (GGPP) to the C3 hydroxyl of sn-glycerol-1-phosphate (G1P). This reaction is the first ether-bond-formation step in the biosynthesis of archaeal membrane lipids. The polypeptide is Geranylgeranylglyceryl phosphate synthase (Methanosarcina barkeri (strain Fusaro / DSM 804)).